We begin with the raw amino-acid sequence, 313 residues long: Ribosomal RNA small subunit methyltransferase H (313 aa).

Residues 36–38, Asp-56, Phe-80, Asp-102, and Gln-109 each bind S-adenosyl-L-methionine; that span reads GGH.

This sequence belongs to the methyltransferase superfamily. RsmH family.

The protein localises to the cytoplasm. The catalysed reaction is cytidine(1402) in 16S rRNA + S-adenosyl-L-methionine = N(4)-methylcytidine(1402) in 16S rRNA + S-adenosyl-L-homocysteine + H(+). In terms of biological role, specifically methylates the N4 position of cytidine in position 1402 (C1402) of 16S rRNA. In Actinobacillus pleuropneumoniae serotype 7 (strain AP76), this protein is Ribosomal RNA small subunit methyltransferase H.